Reading from the N-terminus, the 513-residue chain is ATP synthase subunit alpha (513 aa).

Residue 169–176 (GDRQIGKT) coordinates ATP.

Belongs to the ATPase alpha/beta chains family. F-type ATPases have 2 components, CF(1) - the catalytic core - and CF(0) - the membrane proton channel. CF(1) has five subunits: alpha(3), beta(3), gamma(1), delta(1), epsilon(1). CF(0) has three main subunits: a(1), b(2) and c(9-12). The alpha and beta chains form an alternating ring which encloses part of the gamma chain. CF(1) is attached to CF(0) by a central stalk formed by the gamma and epsilon chains, while a peripheral stalk is formed by the delta and b chains.

The protein resides in the cell inner membrane. It carries out the reaction ATP + H2O + 4 H(+)(in) = ADP + phosphate + 5 H(+)(out). Its function is as follows. Produces ATP from ADP in the presence of a proton gradient across the membrane. The alpha chain is a regulatory subunit. The sequence is that of ATP synthase subunit alpha from Francisella tularensis subsp. holarctica (strain OSU18).